We begin with the raw amino-acid sequence, 326 residues long: tRNA-modifying protein YgfZ (326 aa).

Trp-27 and Trp-189 together coordinate folate.

The protein belongs to the tRNA-modifying YgfZ family.

The protein resides in the cytoplasm. Functionally, folate-binding protein involved in regulating the level of ATP-DnaA and in the modification of some tRNAs. It is probably a key factor in regulatory networks that act via tRNA modification, such as initiation of chromosomal replication. The chain is tRNA-modifying protein YgfZ from Escherichia coli (strain SMS-3-5 / SECEC).